Consider the following 759-residue polypeptide: Xaa-Pro dipeptidyl-peptidase (759 aa).

Active-site charge relay system residues include S347, D467, and H497.

This sequence belongs to the peptidase S15 family. As to quaternary structure, homodimer.

Its subcellular location is the cytoplasm. The enzyme catalyses Hydrolyzes Xaa-Pro-|- bonds to release unblocked, N-terminal dipeptides from substrates including Ala-Pro-|-p-nitroanilide and (sequentially) Tyr-Pro-|-Phe-Pro-|-Gly-Pro-|-Ile.. In terms of biological role, removes N-terminal dipeptides sequentially from polypeptides having unsubstituted N-termini provided that the penultimate residue is proline. This Streptococcus gordonii (strain Challis / ATCC 35105 / BCRC 15272 / CH1 / DL1 / V288) protein is Xaa-Pro dipeptidyl-peptidase.